A 484-amino-acid chain; its full sequence is MANKIRVRYAPSPTGLLHIGNARTALFNYLYARHHGGDFVIRIEDTDRKRHVEDGERSQLENLRWLGMDWDESPETHENYRQSERLELYQRYIDQLLAEGKAYKSYVTEEELAAERERQELAGETPRYINEFIGMSETEKEAYIAEREAAGIIPTVRLAVSESGIYKWTDMVKGDIEFEGSNIGGDWVIQKKDGYPTYNFAVVIDDHVMQISHVIRGDDHIANTPKQLMVYEALGWEAPQFGHMTLIINSETGKKLSKRDTNTLQFIEDYRKKGYMSEAVFNFIALLGWNPGGEEEIFSREQLINLFDENRLSKSPAAFDQKKMDWMSNDYLKNADFESVFALCKPFLEEAGRLTDKAEKLVELYKPQLKSADEIVPLTDLFFADFPELTEAEKEVMAAETVPTVLSVFKEKLVSLSDEEFTRDTIFPQIKAVQKETGIKGKNLFMPIRIAVSGEMHGPELPDTIYLLGKEKSVQHIDNMLAKL.

Positions 11–21 (PSPTGLLHIGN) match the 'HIGH' region motif. A 'KMSKS' region motif is present at residues 255 to 259 (KLSKR). K258 is an ATP binding site.

The protein belongs to the class-I aminoacyl-tRNA synthetase family. Glutamate--tRNA ligase type 1 subfamily. Monomer.

It is found in the cytoplasm. It catalyses the reaction tRNA(Glu) + L-glutamate + ATP = L-glutamyl-tRNA(Glu) + AMP + diphosphate. Functionally, catalyzes the attachment of glutamate to tRNA(Glu) in a two-step reaction: glutamate is first activated by ATP to form Glu-AMP and then transferred to the acceptor end of tRNA(Glu). The sequence is that of Glutamate--tRNA ligase from Streptococcus agalactiae serotype Ia (strain ATCC 27591 / A909 / CDC SS700).